The chain runs to 579 residues: Alpha-longipinene synthase (579 aa).

The Mg(2+) site is built by aspartate 332, aspartate 336, aspartate 476, and asparagine 484. The DDXXD motif motif lies at 332 to 336; that stretch reads DDLYD.

The protein belongs to the terpene synthase family. Tpsd subfamily. Mg(2+) is required as a cofactor. Mn(2+) serves as cofactor.

It carries out the reaction (2E,6E)-farnesyl diphosphate = alpha-longipinene + diphosphate. It functions in the pathway sesquiterpene biosynthesis. Its pathway is terpene metabolism; oleoresin biosynthesis. Terpene synthase (TPS) involved in the biosynthesis of sesquiterpene natural products included in conifer oleoresin secretions and volatile emissions; these compounds contribute to biotic and abiotic stress defense against herbivores and pathogens. Catalyzes the conversion of (2E,6E)-farnesyl diphosphate (FPP) to alpha-longipinene. In Picea sitchensis (Sitka spruce), this protein is Alpha-longipinene synthase.